The chain runs to 3016 residues: Genome polyprotein (3016 aa).

At serine 2 the chain carries N-acetylserine; by host. The interaction with STAT1 stretch occupies residues 2-23 (STLPKPQRKTKRNTNRRPMDVK). The interval 2-58 (STLPKPQRKTKRNTNRRPMDVKFPGGGQIVGGVYLLPRRGPRLGVRATRKTSERSQP) is interaction with EIF2AK2/PKR. The tract at residues 2-59 (STLPKPQRKTKRNTNRRPMDVKFPGGGQIVGGVYLLPRRGPRLGVRATRKTSERSQPR) is interaction with DDX3X. A disordered region spans residues 2–75 (STLPKPQRKT…PKARQSQGRH (74 aa)). Residues 2-168 (STLPKPQRKT…EDGINYATGN (167 aa)) lie on the Cytoplasmic side of the membrane. 2 consecutive short sequence motifs (nuclear localization signal) follow at residues 5–13 (PKPQRKTKR) and 38–43 (PRRGPR). A compositionally biased stretch (basic residues) spans 7–16 (PQRKTKRNTN). Low complexity predominate over residues 32–47 (GGVYLLPRRGPRLGVR). Phosphoserine; by host is present on serine 53. Short sequence motifs (nuclear localization signal) lie at residues 58 to 64 (PRGRRQP) and 66 to 71 (PKARQS). 2 positions are modified to phosphoserine; by host: serine 99 and serine 116. The tract at residues 112-152 (PRRRSRNLGKVIDTLTCGFADLMGYIPVVGAPLGGVAAALA) is important for endoplasmic reticulum and mitochondrial localization. The tract at residues 122–173 (VIDTLTCGFADLMGYIPVVGAPLGGVAAALAHGVRAIEDGINYATGNLPGCS) is interaction with APOA2. Positions 164–167 (YATG) are important for lipid droplets localization. Residues 169-189 (LPGCSFSIFLLALLSCLTTPA) traverse the membrane as a helical segment. Positions 178–191 (LLALLSCLTTPASA) are cleaved as a propeptide — ER anchor for the core protein, removed in mature form by host signal peptidase. Over 190 to 358 (SAVHYRNISG…LEGHWGVIGA (169 aa)) the chain is Lumenal. Asparagine 196, asparagine 209, asparagine 234, and asparagine 250 each carry an N-linked (GlcNAc...) asparagine; by host glycan. The important for fusion stretch occupies residues 265-296 (LVGSAAACSALYIGDLCGGVFLVGQLFTFRPR). The N-linked (GlcNAc...) asparagine; by host glycan is linked to asparagine 305. A helical transmembrane segment spans residues 359–379 (LLYYSMVANWAKVFAVLLLFA). Residues 380-727 (GVDATTHIGS…WEYIVLAFLV (348 aa)) lie on the Lumenal side of the membrane. The segment at 385–411 (THIGSSASATTNRLTSFFSPGSKQNVQ) is HVR1. N-linked (GlcNAc...) (high mannose) asparagine; by host glycans are attached at residues asparagine 416, asparagine 422, and asparagine 429. 4 disulfides stabilise this stretch: cysteine 428–cysteine 552, cysteine 451–cysteine 458, cysteine 486–cysteine 494, and cysteine 503–cysteine 508. Residue asparagine 447 is glycosylated (N-linked (GlcNAc...) asparagine; by host). Residues 474 to 478 (ANISG) form an HVR2 region. N-linked (GlcNAc...) asparagine; by host glycosylation is present at asparagine 475. Residues 480-493 (SNDKPYCWHYPPRP) form a CD81-binding 1 region. The N-linked (GlcNAc...) asparagine; by host glycan is linked to asparagine 532. The interval 544–551 (PPRGSWFG) is CD81-binding 2. Asparagine 556 is a glycosylation site (N-linked (GlcNAc...) asparagine; by host). 4 cysteine pairs are disulfide-bonded: cysteine 564/cysteine 569, cysteine 583/cysteine 587, cysteine 599/cysteine 622, and cysteine 609/cysteine 646. N-linked (GlcNAc...) (high mannose) asparagine; by host glycosylation is found at asparagine 625 and asparagine 647. An intrachain disulfide couples cysteine 654 to cysteine 679. The interval 662–673 (VEMSPLLFSTTQ) is PKR/eIF2-alpha phosphorylation homology domain (PePHD). Residues 728-748 (LAVARVCACLWLMFLVGQAEA) form a helical membrane-spanning segment. At 749 to 759 (ALENLIVLNAT) the chain is on the lumenal side. The chain crosses the membrane as a helical span at residues 760-780 (SAAGSQGWVWGVVFICAAWYI). Over 781–784 (RGRA) the chain is Cytoplasmic. The chain crosses the membrane as a helical span at residues 785–805 (APITTYAILQLWPLLLLVLAL). Residues 806-815 (PRRAYAYNGE) are Lumenal-facing. Residues 816–836 (EAASLGMLAIVIITIFTLTPA) form a helical membrane-spanning segment. The Cytoplasmic segment spans residues 837–883 (YKTLLISTLWWIQYYIARAEAMLYVWVPSLQVRGGRDAVILLTCLLH). Residues 884–904 (PQLGFEVTKAILALLGPLYIL) form a helical membrane-spanning segment. Residues 905–930 (QYSLLKTPYFVRAHILLRVCMFLRGV) are Lumenal-facing. One can recognise a Peptidase C18 domain in the interval 905–1028 (QYSLLKTPYF…DIRDGGWRLL (124 aa)). The interval 906-1208 (YSLLKTPYFV…PVENMQSTAR (303 aa)) is protease NS2-3. Cysteine 924 is lipidated: S-palmitoyl cysteine; by host. A helical transmembrane segment spans residues 931–951 (AGGKYVQAALLRLGAWTGTYI). The segment at 931–951 (AGGKYVQAALLRLGAWTGTYI) is interaction with host SCPS1. The Cytoplasmic segment spans residues 952 to 1659 (YDHLTPLSDW…CMSADLEVIT (708 aa)). Catalysis depends on for protease NS2 activity; shared with dimeric partner residues histidine 954, glutamate 974, and cysteine 995. In terms of domain architecture, Peptidase S29 spans 1029–1210 (APITAYAQQT…ENMQSTARSP (182 aa)). Catalysis depends on charge relay system; for serine protease NS3 activity residues histidine 1085 and aspartate 1109. Positions 1125 and 1127 each coordinate Zn(2+). Serine 1167 (charge relay system; for serine protease NS3 activity) is an active-site residue. 2 residues coordinate Zn(2+): cysteine 1173 and histidine 1177. The region spanning 1219–1371 (PAVPQTYQVG…PNITEVALSS (153 aa)) is the Helicase ATP-binding domain. 1232–1239 (APTGSGKS) serves as a coordination point for ATP. 2 residues coordinate Mg(2+): serine 1239 and glutamate 1319. The DECH box motif lies at 1318 to 1321 (DECH). Positions 1488–1500 (QRRGRTGRGKHGV) are RNA-binding. A helical transmembrane segment spans residues 1660-1680 (STWVLVGGVLAALAAYCLSVG). The NS3-binding stretch occupies residues 1681–1692 (CVVVCGRISTTG). Residues 1681–1807 (CVVVCGRIST…SLTSPLSTST (127 aa)) lie on the Cytoplasmic side of the membrane. A helical membrane pass occupies residues 1808 to 1828 (TLLLNILGGWVASQLANPTAS). Residues 1829-1830 (TA) are Lumenal-facing. A helical membrane pass occupies residues 1831-1851 (FVVSGLAGATVGSIGLGRVLV). Aspartate 1852 is a topological domain (cytoplasmic). The helical transmembrane segment at 1853 to 1873 (IIAGYGAGVSGALVAFKIMSG) threads the bilayer. Over 1874-1883 (ETPSAEDMVN) the chain is Lumenal. Residues 1884 to 1904 (LLPALLSPGALVVGVVCAAIL) form a helical membrane-spanning segment. Residues 1905-1974 (RRHAGPAEGA…WINSDWSTPC (70 aa)) are Cytoplasmic-facing. Residue cysteine 1974 is the site of S-palmitoyl cysteine; by host attachment. An intramembrane segment occupies 1975–2004 (SGSWLRDIWDWVCTVLSDFKVWLKSKLVPA). Topologically, residues 2005 to 2995 (LPGVPFLSCQ…YHSVSRARPR (991 aa)) are cytoplasmic. Residues cysteine 2013, cysteine 2031, cysteine 2033, and cysteine 2054 each coordinate Zn(2+). The segment at 2122–2210 (EFFTEVDGVR…ASSLASQLSA (89 aa)) is FKBP8-binding. Residues 2122–2335 (EFFTEVDGVR…PVPPPRRKSV (214 aa)) form a transcriptional activation region. The interval 2137-2141 (PACKP) is interaction with non-structural protein 4A. The interaction with host SKP2 stretch occupies residues 2191–2443 (RLARGSPPSC…ALVTPCAAEE (253 aa)). A phosphoserine; by host mark is found at serine 2196, serine 2199, serine 2203, serine 2206, serine 2209, and serine 2212. Residues 2212–2251 (SLKATCTTHCAHPDADLIEANLLWRQEVGGNITRVESENK) form an ISDR region. The interval 2212–2277 (SLKATCTTHC…REPSVPAECH (66 aa)) is interaction with EIF2AK2/PKR. The interval 2251–2309 (KVIVLDSFDPLVPEYDDREPSVPAECHRPNRPKFPPALPIWARPDYNPPLLETWKKPDY) is NS4B-binding. Positions 2302-2379 (ETWKKPDYAP…PTTSKSSDQA (78 aa)) are V3. Positions 2325–2328 (PPVP) match the SH3-binding motif. A Nuclear localization signal motif is present at residues 2330–2338 (PRRKSVVHL). A Glycyl lysine isopeptide (Lys-Gly) (interchain with G-Cter in ubiquitin) cross-link involves residue lysine 2353. A disordered region spans residues 2353-2414 (KSFPTQPAST…PDLSSGSWST (62 aa)). A compositionally biased stretch (polar residues) spans 2355-2376 (FPTQPASTPDSDSGHPTTSKSS). Serine 2454 bears the Phosphoserine; by host mark. Residues 2639–2757 (PMGFSYDTRC…IAESAGVQED (119 aa)) enclose the RdRp catalytic domain. Mg(2+) is bound by residues aspartate 2645, aspartate 2743, and aspartate 2744. A helical transmembrane segment spans residues 2996-3016 (IFLLCLLLLSVGVGIFLLPAR).

The protein belongs to the hepacivirus polyprotein family. Homooligomer. Interacts with E1 (via C-terminus). Interacts with the non-structural protein 5A. Interacts (via N-terminus) with host STAT1 (via SH2 domain); this interaction results in decreased STAT1 phosphorylation and ubiquitin-mediated proteasome-dependent STAT1 degradation, leading to decreased IFN-stimulated gene transcription. Interacts with host STAT3; this interaction constitutively activates STAT3. Interacts with host LTBR receptor. Interacts with host TNFRSF1A receptor and possibly induces apoptosis. Interacts with host HNRPK. Interacts with host YWHAE. Interacts with host UBE3A/E6AP. Interacts with host DDX3X. Interacts with host APOA2. Interacts with host RXRA protein. Interacts with host SP110 isoform 3/Sp110b; this interaction sequesters the transcriptional corepressor SP110 away from the nucleus. Interacts with host CREB3 nuclear transcription protein; this interaction triggers cell transformation. Interacts with host ACY3. Interacts with host C1QR1. Interacts with host RBM24; this interaction, which enhances the interaction of the mature core protein with 5'-UTR, may inhibit viral translation and favor replication. Interacts with host EIF2AK2/PKR; this interaction induces the autophosphorylation of EIF2AK2. Part of the viral assembly initiation complex composed of NS2, E1, E2, NS3, NS4A, NS5A and the mature core protein. In terms of assembly, forms a heterodimer with envelope glycoprotein E2. Interacts with mature core protein. Interacts with protease NS2. The heterodimer E1/E2 interacts with host CLDN1; this interaction plays a role in viral entry into host cell. Interacts with host SPSB2 (via C-terminus). Part of the viral assembly initiation complex composed of NS2, E1, E2, NS3, NS4A, NS5A and the mature core protein. Interacts with host NEURL3; this interaction prevents E1 binding to glycoprotein E2. As to quaternary structure, forms a heterodimer with envelope glycoprotein E1. Interacts with host CD81 and SCARB1 receptors; these interactions play a role in viral entry into host cell. Interacts with host EIF2AK2/PKR; this interaction inhibits EIF2AK2 and probably allows the virus to evade the innate immune response. Interacts with host CD209/DC-SIGN and CLEC4M/DC-SIGNR. Interact with host SPCS1; this interaction is essential for viral particle assembly. Interacts with protease NS2. The heterodimer E1/E2 interacts with host CLDN1; this interaction plays a role in viral entry into host cell. Part of the viral assembly initiation complex composed of NS2, E1, E2, NS3, NS4A, NS5A and the mature core protein. Interacts with host SLC3A2/4F2hc; the interaction may facilitate viral entry into host cell. Interacts with human PLSCR1. Homohexamer. Homoheptamer. Interacts with protease NS2. In terms of assembly, homodimer. Interacts with host SPCS1; this interaction is essential for viral particle assembly. Interacts with envelope glycoprotein E1. Interacts with envelope glycoprotein E2. Interacts with viroporin p7. Interacts with serine protease/helicase NS3. Part of the replication complex composed of NS2, NS3, NS4A, NS4B, NS5A and the RNA-directed RNA polymerase embedded in an ER-derived membranous web. Part of the viral assembly initiation complex composed of NS2, E1, E2, NS3, NS4A, NS5A and the mature core protein. As to quaternary structure, interacts with protease NS2. Interacts with non-structural protein 4A; this interaction stabilizes the folding of NS3 serine protease. NS3-NS4A interaction is essential for NS3 activation and allows membrane anchorage of the latter. NS3/NS4A complex also prevents phosphorylation of host IRF3, thus preventing the establishment of dsRNA induced antiviral state. Interacts with host MAVS; this interaction leads to the cleavage and inhibition of host MAVS. Interacts with host TICAM1; this interaction leads to the cleavage and inhibition of host TICAM1. Interacts with host TANK-binding kinase/TBK1; this interaction results in the inhibition of the association between TBK1 and IRF3, which leads to the inhibition of IRF3 activation. Interacts with host RBM24. Part of the replication complex composed of NS2, NS3, NS4A, NS4B, NS5A and the RNA-directed RNA polymerase embedded in an ER-derived membranous web. Part of the viral assembly initiation complex composed of NS2, E1, E2, NS3, NS4A, NS5A and the mature core protein. Interacts with NS3 serine protease; this interaction stabilizes the folding of NS3 serine protease. NS3-NS4A interaction is essential for NS3 activation and allows membrane anchorage of the latter. Interacts with non-structural protein 5A (via N-terminus). Part of the replication complex composed of NS2, NS3, NS4A, NS4B, NS5A and the RNA-directed RNA polymerase embedded in an ER-derived membranous web. Part of the viral assembly initiation complex composed of NS2, E1, E2, NS3, NS4A, NS5A and the mature core protein. In terms of assembly, homomultimer. Interacts with non-structural protein NS5A. Interacts with host PLA2G4C; this interaction likely initiates the recruitment of replication complexes to lipid droplets. Interacts with host STING; this interaction disrupts the interaction between STING and TBK1 thereby suppressing the interferon signaling. Part of the replication complex composed of NS2, NS3, NS4A, NS4B, NS5A and the RNA-directed RNA polymerase embedded in an ER-derived membranous web. As to quaternary structure, monomer. Homodimer; dimerization is required for RNA-binding. Interacts with the mature core protein. Interacts (via N-terminus) with non-structural protein 4A. Interacts with non-structural protein 4B. Interacts (via region D2) with RNA-directed RNA polymerase. Part of the viral assembly initiation complex composed of NS2, E1, E2, NS3, NS4A, NS5A and the mature core protein. Part of the replication complex composed of NS2, NS3, NS4A, NS4B, NS5A and the RNA-directed RNA polymerase embedded in an ER-derived membranous web. Interacts with host GRB2. Interacts with host BIN1. Interacts with host PIK3R1. Interacts with host SRCAP. Interacts with host FKBP8. Interacts (via C-terminus) with host VAPB (via MSP domain). Interacts with host EIF2AK2/PKR; this interaction leads to disruption of EIF2AK2 dimerization by NS5A and probably allows the virus to evade the innate immune response. Interacts (via N-terminus) with host PACSIN2 (via N-terminus); this interaction attenuates protein kinase C alpha-mediated phosphorylation of PACSIN2 by disrupting the interaction between PACSIN2 and PRKCA. Interacts (via N-terminus) with host SRC kinase (via SH2 domain). Interacts with most Src-family kinases. Interacts with host IFI27 and SKP2; promotes the ubiquitin-mediated proteasomal degradation of NS5A. Interacts with host GPS2. Interacts with host TNFRSF21; this interaction allows the modulation by the virus of JNK, p38 MAPK, STAT3, and Akt signaling pathways in a DR6-dependent manner. Interacts (via N-terminus) with host CIDEB (via N-terminus); this interaction seems to regulate the association of HCV particles with APOE. Interacts with host CHKA/Choline Kinase-alpha; CHKA bridges host PI4KA and NS5A and potentiates NS5A-stimulated PI4KA activity, which then facilitates the targeting of the ternary complex to the ER for viral replication. Interacts with host SPSB2 (via C-terminus); this interaction targets NS5A for ubiquitination and degradation. Interacts with host RAB18; this interaction may promote the association of NS5A and other replicase components with lipid droplets. Interacts (via region D2) with host PPIA/CYPA; the interaction stimulates RNA-binding ability of NS5A and is dependent on the peptidyl-prolyl cis-trans isomerase activity of PPIA/CYPA. Interacts with host TRIM14; this interaction induces the degradation of NS5A. Homooligomer. Interacts with non-structural protein 5A. Interacts with host VAPB. Interacts with host PRK2/PKN2. Interacts with host HNRNPA1 and SEPT6; these interactions facilitate viral replication. Part of the replication complex composed of NS2, NS3, NS4A, NS4B, NS5A and the RNA-directed RNA polymerase. Requires Zn(2+) as cofactor. It depends on Mg(2+) as a cofactor. Post-translationally, specific enzymatic cleavages in vivo yield mature proteins. The structural proteins, core, E1, E2 and p7 are produced by proteolytic processing by host signal peptidases. The core protein precursor is synthesized as a 23 kDa, which is retained in the ER membrane through the hydrophobic signal peptide. Cleavage by the signal peptidase releases the 21 kDa mature core protein. The cleavage of the core protein precursor occurs between aminoacids 176 and 188 but the exact cleavage site is not known. Some degraded forms of the core protein appear as well during the course of infection. The other proteins (p7, NS2, NS3, NS4A, NS4B, NS5A and NS5B) are cleaved by the viral proteases. Autoprocessing between NS2 and NS3 is mediated by the NS2 cysteine protease catalytic domain and regulated by the NS3 N-terminal domain. In terms of processing, phosphorylated by host PKC and PKA. Ubiquitinated; mediated by UBE3A and leading to core protein subsequent proteasomal degradation. Post-translationally, highly N-glycosylated. In terms of processing, palmitoylation is required for NS2/3 autoprocessing and E2 recruitment to membranes. Palmitoylated. This modification may play a role in its polymerization or in protein-protein interactions. Post-translationally, phosphorylated on serines in a basal form termed p56. p58 is a hyperphosphorylated form of p56. p56 and p58 coexist in the cell in roughly equivalent amounts. Hyperphosphorylation is dependent on the presence of NS4A. Host CSNK1A1/CKI-alpha or RPS6KB1 kinases may be responsible for NS5A phosphorylation. In terms of processing, tyrosine phosphorylation is essential for the interaction with host SRC. Ubiquitinated. Ubiquitination, most probably at Lys-2353, mediated by host IFI27 and SKP2 leads to proteasomal degradation, restricting viral infection. Ubiquitination by host TRIM22 leads to interruption of viral replication. Post-translationally, the N-terminus is phosphorylated by host PRK2/PKN2.

Its subcellular location is the host endoplasmic reticulum membrane. The protein resides in the host mitochondrion membrane. It localises to the virion. It is found in the host cytoplasm. The protein localises to the host nucleus. Its subcellular location is the host lipid droplet. The protein resides in the virion membrane. It localises to the host mitochondrion. It is found in the host cell membrane. The protein localises to the host perinuclear region. It catalyses the reaction Hydrolysis of four peptide bonds in the viral precursor polyprotein, commonly with Asp or Glu in the P6 position, Cys or Thr in P1 and Ser or Ala in P1'.. The enzyme catalyses a ribonucleoside 5'-triphosphate + H2O = a ribonucleoside 5'-diphosphate + phosphate + H(+). The catalysed reaction is ATP + H2O = ADP + phosphate + H(+). It carries out the reaction RNA(n) + a ribonucleoside 5'-triphosphate = RNA(n+1) + diphosphate. With respect to regulation, inhibited by the antiviral drug hexamethylene amiloride. Inhibition by amantadine appears to be genotype-dependent. Also inhibited by long-alkyl-chain iminosugar derivatives. Its activity is regulated as follows. Activity is up-regulated by PRK2/PKN2-mediated phosphorylation. Functionally, packages viral RNA to form a viral nucleocapsid, and promotes virion budding. Participates in the viral particle production as a result of its interaction with the non-structural protein 5A. Binds RNA and may function as a RNA chaperone to induce the RNA structural rearrangements taking place during virus replication. Modulates viral translation initiation by interacting with viral IRES and 40S ribosomal subunit. Affects various cell signaling pathways, host immunity and lipid metabolism. Prevents the establishment of cellular antiviral state by blocking the interferon-alpha/beta (IFN-alpha/beta) and IFN-gamma signaling pathways and by blocking the formation of phosphorylated STAT1 and promoting ubiquitin-mediated proteasome-dependent degradation of STAT1. Activates STAT3 leading to cellular transformation. Regulates the activity of cellular genes, including c-myc and c-fos. May repress the promoter of p53, and sequester CREB3 and SP110 isoform 3/Sp110b in the cytoplasm. Represses cell cycle negative regulating factor CDKN1A, thereby interrupting an important check point of normal cell cycle regulation. Targets transcription factors involved in the regulation of inflammatory responses and in the immune response: suppresses TNF-induced NF-kappa-B activation, and activates AP-1. Binds to dendritic cells (DCs) via C1QR1, resulting in down-regulation of T-lymphocytes proliferation. Alters lipid metabolism by interacting with hepatocellular proteins involved in lipid accumulation and storage. Induces up-regulation of FAS promoter activity, and thereby contributes to the increased triglyceride accumulation in hepatocytes (steatosis). Its function is as follows. Forms a heterodimer with envelope glycoprotein E2, which mediates virus attachment to the host cell, virion internalization through clathrin-dependent endocytosis and fusion with host membrane. Fusion with the host cell is most likely mediated by both E1 and E2, through conformational rearrangements of the heterodimer required for fusion rather than a classical class II fusion mechanism. E1/E2 heterodimer binds host apolipoproteins such as APOB and ApoE thereby forming a lipo-viro-particle (LVP). APOE associated to the LVP allows the initial virus attachment to cell surface receptors such as the heparan sulfate proteoglycans (HSPGs), syndecan-1 (SDC1), syndecan-1 (SDC2), the low-density lipoprotein receptor (LDLR) and scavenger receptor class B type I (SCARB1). The cholesterol transfer activity of SCARB1 allows E2 exposure and binding of E2 to SCARB1 and the tetraspanin CD81. E1/E2 heterodimer binding on CD81 activates the epithelial growth factor receptor (EGFR) signaling pathway. Diffusion of the complex E1-E2-EGFR-SCARB1-CD81 to the cell lateral membrane allows further interaction with Claudin 1 (CLDN1) and occludin (OCLN) to finally trigger HCV entry. In terms of biological role, forms a heterodimer with envelope glycoprotein E1, which mediates virus attachment to the host cell, virion internalization through clathrin-dependent endocytosis and fusion with host membrane. Fusion with the host cell is most likely mediated by both E1 and E2, through conformational rearrangements of the heterodimer required for fusion rather than a classical class II fusion mechanism. The interaction between envelope glycoprotein E2 and host apolipoprotein E/APOE allows the proper assembly, maturation and infectivity of the viral particles. This interaction is probably promoted via the up-regulation of cellular autophagy by the virus. E1/E2 heterodimer binds host apolipoproteins such as APOB and APOE thereby forming a lipo-viro-particle (LVP). APOE associated to the LVP allows the initial virus attachment to cell surface receptors such as the heparan sulfate proteoglycans (HSPGs), syndecan-1 (SDC1), syndecan-1 (SDC2), the low-density lipoprotein receptor (LDLR) and scavenger receptor class B type I (SCARB1). The cholesterol transfer activity of SCARB1 allows E2 exposure and binding of E2 to SCARB1 and the tetraspanin CD81. E1/E2 heterodimer binding on CD81 activates the epithelial growth factor receptor (EGFR) signaling pathway. Diffusion of the complex E1-E2-EGFR-SCARB1-CD81 to the cell lateral membrane allows further interaction with Claudin 1 (CLDN1) and occludin (OCLN) to finally trigger HCV entry. Inhibits host EIF2AK2/PKR activation, preventing the establishment of an antiviral state. Viral ligand for CD209/DC-SIGN and CLEC4M/DC-SIGNR, which are respectively found on dendritic cells (DCs), and on liver sinusoidal endothelial cells and macrophage-like cells of lymph node sinuses. These interactions allow the capture of circulating HCV particles by these cells and subsequent facilitated transmission to permissive cells such as hepatocytes and lymphocyte subpopulations. The interaction between E2 and host amino acid transporter complex formed by SLC3A2 and SLC7A5/LAT1 may facilitate viral entry into host cell. Ion channel protein that acts as a viroporin and plays an essential role in the assembly, envelopment and secretion of viral particles. Regulates the host cell secretory pathway, which induces the intracellular retention of viral glycoproteins and favors assembly of viral particles. Creates a pore in acidic organelles and releases Ca(2+) and H(+) in the cytoplasm of infected cells, leading to a productive viral infection. High levels of cytoplasmic Ca(2+) may trigger membrane trafficking and transport of viral ER-associated proteins to viroplasms, sites of viral genome replication. This ionic imbalance induces the assembly of the inflammasome complex, which triggers the maturation of pro-IL-1beta into IL-1beta through the action of caspase-1. Targets also host mitochondria and induces mitochondrial depolarization. In addition of its role as a viroporin, acts as a lipid raft adhesion factor. Functionally, cysteine protease required for the proteolytic auto-cleavage between the non-structural proteins NS2 and NS3. The N-terminus of NS3 is required for the function of NS2 protease (active region NS2-3). Promotes the initiation of viral particle assembly by mediating the interaction between structural and non-structural proteins. Its function is as follows. Displays three enzymatic activities: serine protease with a chymotrypsin-like fold, NTPase and RNA helicase. NS3 serine protease, in association with NS4A, is responsible for the cleavages of NS3-NS4A, NS4A-NS4B, NS4B-NS5A and NS5A-NS5B. The NS3/NS4A complex prevents phosphorylation of host IRF3, thus preventing the establishment of dsRNA induced antiviral state. The NS3/NS4A complex induces host amino acid transporter component SLC3A2, thus contributing to HCV propagation. NS3 RNA helicase binds to RNA and unwinds both dsDNA and dsRNA in the 3' to 5' direction, and likely resolves RNA complicated stable secondary structures in the template strand. Binds a single ATP and catalyzes the unzipping of a single base pair of dsRNA. Inhibits host antiviral proteins TBK1 and IRF3 thereby preventing the establishment of an antiviral state. Cleaves host MAVS/CARDIF thereby preventing the establishment of an antiviral state. Cleaves host TICAM1/TRIF, thereby disrupting TLR3 signaling and preventing the establishment of an antiviral state. In terms of biological role, peptide cofactor which forms a non-covalent complex with the N-terminal of NS3 serine protease. The NS3/NS4A complex prevents phosphorylation of host IRF3, thus preventing the establishment of dsRNA induced antiviral state. The NS3/NS4A complex induces host amino acid transporter component SLC3A2, thus contributing to HCV propagation. Induces a specific membrane alteration that serves as a scaffold for the virus replication complex. This membrane alteration gives rise to the so-called ER-derived membranous web that contains the replication complex. NS4B self-interaction contributes to its function in membranous web formation. Promotes host TRIF protein degradation in a CASP8-dependent manner thereby inhibiting host TLR3-mediated interferon signaling. Disrupts the interaction between STING and TBK1 contributing to the inhibition of interferon signaling. Functionally, phosphorylated protein that is indispensable for viral replication and assembly. Both hypo- and hyperphosphorylated states are required for the viral life cycle. The hyperphosphorylated form of NS5A is an inhibitor of viral replication. Involved in RNA-binding and especially in binding to the viral genome. Zinc is essential for RNA-binding. Participates in the viral particle production as a result of its interaction with the mature viral core protein. Its interaction with host VAPB may target the viral replication complex to vesicles. Down-regulates viral IRES translation initiation. Mediates interferon resistance, presumably by interacting with and inhibiting host EIF2AK2/PKR. Prevents BIN1-induced apoptosis. Acts as a transcriptional activator of some host genes important for viral replication when localized in the nucleus. Via the interaction with host PACSIN2, modulates lipid droplet formation in order to promote virion assembly. Modulates TNFRSF21/DR6 signaling pathway for viral propagation. Its function is as follows. RNA-dependent RNA polymerase that performs primer-template recognition and RNA synthesis during viral replication. Initiates RNA transcription/replication at a flavin adenine dinucleotide (FAD), resulting in a 5'- FAD cap on viral RNAs. In this way, recognition of viral 5' RNA by host pattern recognition receptors can be bypassed, thereby evading activation of antiviral pathways. The polypeptide is Genome polyprotein (Hepatitis C virus genotype 6k (isolate VN405) (HCV)).